A 220-amino-acid chain; its full sequence is ATP-dependent dethiobiotin synthetase BioD (220 aa).

13 to 18 contacts ATP; it reads EVGKTV. Threonine 17 serves as a coordination point for Mg(2+). The active site involves lysine 38. Serine 42 is a binding site for substrate. ATP contacts are provided by residues aspartate 55, 116 to 119, 176 to 177, and asparagine 212; these read EGAG and NR. Positions 55 and 116 each coordinate Mg(2+).

This sequence belongs to the dethiobiotin synthetase family. In terms of assembly, homodimer. Mg(2+) is required as a cofactor.

The protein resides in the cytoplasm. It catalyses the reaction (7R,8S)-7,8-diammoniononanoate + CO2 + ATP = (4R,5S)-dethiobiotin + ADP + phosphate + 3 H(+). Its pathway is cofactor biosynthesis; biotin biosynthesis; biotin from 7,8-diaminononanoate: step 1/2. In terms of biological role, catalyzes a mechanistically unusual reaction, the ATP-dependent insertion of CO2 between the N7 and N8 nitrogen atoms of 7,8-diaminopelargonic acid (DAPA, also called 7,8-diammoniononanoate) to form a ureido ring. The chain is ATP-dependent dethiobiotin synthetase BioD from Photobacterium profundum (strain SS9).